The sequence spans 752 residues: Photosystem I P700 chlorophyll a apoprotein A1 (752 aa).

8 helical membrane passes run 73-96 (IFSAHFGQLAIIFLWISGMHFHGA), 159-182 (LYWTAIGGLAMSAIMLFAGWFHYH), 198-222 (MNHHLAGLLGLGCLSWSGHQIHIAL), 294-312 (IAHHHLALSVLFIIAGHMY), 349-372 (WHAQLAINLAMMGSLSIIVAHHMY), 388-414 (LSLFTHHMWIGGFCVVGGAAHGAIFMV), 436-458 (AIISHLNWVCIFLGCHAFGFYIH), and 533-551 (FMVHHIHAFTIHVTVLILL). 2 residues coordinate [4Fe-4S] cluster: Cys-575 and Cys-584. Transmembrane regions (helical) follow at residues 591 to 612 (HVFLGLFWMYNSISVVIFHFSW) and 666 to 688 (SSAYGLIFLGAHFIWAFSLMFLF). Residue His-677 participates in chlorophyll a' binding. The chlorophyll a site is built by Met-685 and Tyr-693. Residue Trp-694 participates in phylloquinone binding. A helical transmembrane segment spans residues 726 to 746 (AVGLAHYLLGGIGTTWAFFLA).

The protein belongs to the PsaA/PsaB family. The PsaA/B heterodimer binds the P700 chlorophyll special pair and subsequent electron acceptors. PSI consists of a core antenna complex that captures photons, and an electron transfer chain that converts photonic excitation into a charge separation. The eukaryotic PSI reaction center is composed of at least 11 subunits. Requires P700 is a chlorophyll a/chlorophyll a' dimer, A0 is one or more chlorophyll a, A1 is one or both phylloquinones and FX is a shared 4Fe-4S iron-sulfur center. as cofactor.

It localises to the plastid. The protein localises to the chloroplast thylakoid membrane. It catalyses the reaction reduced [plastocyanin] + hnu + oxidized [2Fe-2S]-[ferredoxin] = oxidized [plastocyanin] + reduced [2Fe-2S]-[ferredoxin]. In terms of biological role, psaA and PsaB bind P700, the primary electron donor of photosystem I (PSI), as well as the electron acceptors A0, A1 and FX. PSI is a plastocyanin/cytochrome c6-ferredoxin oxidoreductase, converting photonic excitation into a charge separation, which transfers an electron from the donor P700 chlorophyll pair to the spectroscopically characterized acceptors A0, A1, FX, FA and FB in turn. Oxidized P700 is reduced on the lumenal side of the thylakoid membrane by plastocyanin or cytochrome c6. The sequence is that of Photosystem I P700 chlorophyll a apoprotein A1 from Thalassiosira pseudonana (Marine diatom).